The primary structure comprises 217 residues: Homologous-pairing protein 2 homolog (217 aa).

Residues 93–153 (IVALTAKVQS…LKNIKAATNH (61 aa)) adopt a coiled-coil conformation. Residues 118-182 (SSALTTPEMQ…WRKRKRMATE (65 aa)) are DNA-binding.

This sequence belongs to the HOP2 family. Interacts with the DNA-binding domain of the nuclear receptors NR3C1/GR, ESR2/ER-beta, THRB and RXRA. Forms a stable heterodimer with MND1. Interacts with PSMC3/TBP1. Post-translationally, PTM: Phosphorylated by PKA, PKC and MAPK. As to expression, highly expressed in testis and colon.

It localises to the nucleus. Its function is as follows. Plays an important role in meiotic recombination. Stimulates DMC1-mediated strand exchange required for pairing homologous chromosomes during meiosis. The complex PSMC3IP/MND1 binds DNA, stimulates the recombinase activity of DMC1 as well as DMC1 D-loop formation from double-strand DNA. This complex stabilizes presynaptic RAD51 and DMC1 filaments formed on single strand DNA to capture double-strand DNA. This complex stimulates both synaptic and presynaptic critical steps in RAD51 and DMC1-promoted homologous pairing. May inhibit HIV-1 viral protein TAT activity and modulate the activity of proteasomes through association with PSMC3. Acts as a tissue specific coactivator of hormone-dependent transcription mediated by nuclear receptors. This chain is Homologous-pairing protein 2 homolog (PSMC3IP), found in Homo sapiens (Human).